The following is a 155-amino-acid chain: Small ribosomal subunit protein uS9 (155 aa).

This sequence belongs to the universal ribosomal protein uS9 family.

The polypeptide is Small ribosomal subunit protein uS9 (Sinorhizobium medicae (strain WSM419) (Ensifer medicae)).